The following is a 316-amino-acid chain: tRNA dimethylallyltransferase (316 aa).

G17–T24 provides a ligand contact to ATP. Position 19–24 (T19–T24) interacts with substrate. Interaction with substrate tRNA stretches follow at residues D42 to L45, Q166 to R170, and R247 to R252.

This sequence belongs to the IPP transferase family. In terms of assembly, monomer. The cofactor is Mg(2+).

The enzyme catalyses adenosine(37) in tRNA + dimethylallyl diphosphate = N(6)-dimethylallyladenosine(37) in tRNA + diphosphate. Functionally, catalyzes the transfer of a dimethylallyl group onto the adenine at position 37 in tRNAs that read codons beginning with uridine, leading to the formation of N6-(dimethylallyl)adenosine (i(6)A). The chain is tRNA dimethylallyltransferase from Salmonella newport (strain SL254).